Consider the following 141-residue polypeptide: Nucleoside triphosphatase NudI (141 aa).

One can recognise a Nudix hydrolase domain in the interval methionine 1 to leucine 141. The Nudix box motif lies at glycine 38–glycine 59.

Belongs to the Nudix hydrolase family. NudI subfamily. Monomer. It depends on Mg(2+) as a cofactor.

The catalysed reaction is a ribonucleoside 5'-triphosphate + H2O = a ribonucleoside 5'-phosphate + diphosphate + H(+). It catalyses the reaction a 2'-deoxyribonucleoside 5'-triphosphate + H2O = a 2'-deoxyribonucleoside 5'-phosphate + diphosphate + H(+). It carries out the reaction dUTP + H2O = dUMP + diphosphate + H(+). The enzyme catalyses dTTP + H2O = dTMP + diphosphate + H(+). The catalysed reaction is dCTP + H2O = dCMP + diphosphate + H(+). In terms of biological role, catalyzes the hydrolysis of nucleoside triphosphates, with a preference for pyrimidine deoxynucleoside triphosphates (dUTP, dTTP and dCTP). The polypeptide is Nucleoside triphosphatase NudI (Escherichia coli O6:K15:H31 (strain 536 / UPEC)).